A 492-amino-acid chain; its full sequence is Catalase isozyme B (492 aa).

Residues 1–20 (MDPYKHRPSSGSNSTFWTTN) are disordered. Residues 9–20 (SSGSNSTFWTTN) are compositionally biased toward polar residues. A heme-binding site is contributed by R62. Residue H65 is part of the active site. R102 contributes to the heme binding site. N138 is an active-site residue. F151 contributes to the heme binding site. Residue Y210 is modified to Phosphotyrosine. A cross-link (3-(S-cysteinyl)-tyrosine (Cys-Tyr)) is located at residues 325 to 348 (CPAIIVPGIHYSDDKLLQTRIFSY). Heme contacts are provided by R344, Y348, and R355. Positions 484–492 (SRLNLKPNM) match the Peroxisome targeting signal motif.

Belongs to the catalase family. In terms of assembly, homotetramer. Interacts with GLO1 and GLO4; these interactions are disturbed by alpha-hydroxy-2-pyridinemethanesulfonic acid (HPMS) and salicylic acid (SA). Interacts with STRK1 at the plasma membrane. Requires heme as cofactor. As to expression, predominantly expressed in roots and, at low levels, in leaves (e.g. sheaths). Detected in seeds. Also present in panicles and culms. Observed in stems and anthers.

The protein localises to the peroxisome. It is found in the glyoxysome. The protein resides in the cell membrane. It catalyses the reaction 2 H2O2 = O2 + 2 H2O. Strongly inhibited by beta-mercaptoethanol, sodium azide and potassium cyanide. Slightly repressed by 3-amino-1,2,4-triazole (3-AT). Activity is repressed proportionally to increased concentration of NaCl, KCl, LiCl and MgCl(2). Functionally, occurs in almost all aerobically respiring organisms and serves to protect cells from the toxic effects of hydrogen peroxide. May prevent the excessive accumulation of H(2)O(2) during water stress in response to the accumulation of abscisic acid (ABA). Involved in the modulation of ROS levels related to root growth regulation. Required for pollen viability and floret fertility upon heat stress (HS) by detoxifying reactive oxygen species (ROS) and malondialdehyde (MDA) accumulation in developing anthers exposed to HS. This Oryza sativa subsp. japonica (Rice) protein is Catalase isozyme B (CATB).